Here is a 441-residue protein sequence, read N- to C-terminus: NADH-quinone oxidoreductase subunit D 1 (441 aa).

It belongs to the complex I 49 kDa subunit family. NDH-1 is composed of 14 different subunits. Subunits NuoB, C, D, E, F, and G constitute the peripheral sector of the complex.

It is found in the cell membrane. The catalysed reaction is a quinone + NADH + 5 H(+)(in) = a quinol + NAD(+) + 4 H(+)(out). Its function is as follows. NDH-1 shuttles electrons from NADH, via FMN and iron-sulfur (Fe-S) centers, to quinones in the respiratory chain. The immediate electron acceptor for the enzyme in this species is believed to be a menaquinone. Couples the redox reaction to proton translocation (for every two electrons transferred, four hydrogen ions are translocated across the cytoplasmic membrane), and thus conserves the redox energy in a proton gradient. This chain is NADH-quinone oxidoreductase subunit D 1, found in Salinispora arenicola (strain CNS-205).